Here is a 578-residue protein sequence, read N- to C-terminus: Proline--tRNA ligase (578 aa).

The protein belongs to the class-II aminoacyl-tRNA synthetase family. ProS type 1 subfamily. In terms of assembly, homodimer.

It is found in the cytoplasm. The enzyme catalyses tRNA(Pro) + L-proline + ATP = L-prolyl-tRNA(Pro) + AMP + diphosphate. In terms of biological role, catalyzes the attachment of proline to tRNA(Pro) in a two-step reaction: proline is first activated by ATP to form Pro-AMP and then transferred to the acceptor end of tRNA(Pro). As ProRS can inadvertently accommodate and process non-cognate amino acids such as alanine and cysteine, to avoid such errors it has two additional distinct editing activities against alanine. One activity is designated as 'pretransfer' editing and involves the tRNA(Pro)-independent hydrolysis of activated Ala-AMP. The other activity is designated 'posttransfer' editing and involves deacylation of mischarged Ala-tRNA(Pro). The misacylated Cys-tRNA(Pro) is not edited by ProRS. The chain is Proline--tRNA ligase from Burkholderia ambifaria (strain ATCC BAA-244 / DSM 16087 / CCUG 44356 / LMG 19182 / AMMD) (Burkholderia cepacia (strain AMMD)).